A 345-amino-acid polypeptide reads, in one-letter code: Phosphate acyltransferase (345 aa).

The protein belongs to the PlsX family. In terms of assembly, homodimer. Probably interacts with PlsY.

It localises to the cytoplasm. The enzyme catalyses a fatty acyl-[ACP] + phosphate = an acyl phosphate + holo-[ACP]. It participates in lipid metabolism; phospholipid metabolism. Functionally, catalyzes the reversible formation of acyl-phosphate (acyl-PO(4)) from acyl-[acyl-carrier-protein] (acyl-ACP). This enzyme utilizes acyl-ACP as fatty acyl donor, but not acyl-CoA. The sequence is that of Phosphate acyltransferase from Wolbachia pipientis subsp. Culex pipiens (strain wPip).